We begin with the raw amino-acid sequence, 257 residues long: Type III pantothenate kinase (257 aa).

6–13 (DCGNTNTV) is an ATP binding site. Position 107–110 (107–110 (GPDR)) interacts with substrate. D109 functions as the Proton acceptor in the catalytic mechanism. D129 lines the K(+) pocket. T132 lines the ATP pocket. T184 lines the substrate pocket.

It belongs to the type III pantothenate kinase family. As to quaternary structure, homodimer. NH4(+) is required as a cofactor. It depends on K(+) as a cofactor.

It localises to the cytoplasm. The enzyme catalyses (R)-pantothenate + ATP = (R)-4'-phosphopantothenate + ADP + H(+). The protein operates within cofactor biosynthesis; coenzyme A biosynthesis; CoA from (R)-pantothenate: step 1/5. Catalyzes the phosphorylation of pantothenate (Pan), the first step in CoA biosynthesis. The protein is Type III pantothenate kinase of Roseobacter denitrificans (strain ATCC 33942 / OCh 114) (Erythrobacter sp. (strain OCh 114)).